The following is a 105-amino-acid chain: Acylphosphatase (105 aa).

Positions 16–105 constitute an Acylphosphatase-like domain; sequence RLTAWVRGRV…RGGYSGFTQA (90 aa). Residues Arg31 and Asn49 contribute to the active site.

This sequence belongs to the acylphosphatase family.

The catalysed reaction is an acyl phosphate + H2O = a carboxylate + phosphate + H(+). This is Acylphosphatase (acyP) from Acidothermus cellulolyticus (strain ATCC 43068 / DSM 8971 / 11B).